A 349-amino-acid polypeptide reads, in one-letter code: tRNA N6-adenosine threonylcarbamoyltransferase (349 aa).

Fe cation-binding residues include histidine 113 and histidine 117. Substrate contacts are provided by residues 135 to 139 (LVSGG), aspartate 169, glycine 182, aspartate 186, and asparagine 281. Position 309 (aspartate 309) interacts with Fe cation.

This sequence belongs to the KAE1 / TsaD family. Requires Fe(2+) as cofactor.

It localises to the cytoplasm. It catalyses the reaction L-threonylcarbamoyladenylate + adenosine(37) in tRNA = N(6)-L-threonylcarbamoyladenosine(37) in tRNA + AMP + H(+). In terms of biological role, required for the formation of a threonylcarbamoyl group on adenosine at position 37 (t(6)A37) in tRNAs that read codons beginning with adenine. Is involved in the transfer of the threonylcarbamoyl moiety of threonylcarbamoyl-AMP (TC-AMP) to the N6 group of A37, together with TsaE and TsaB. TsaD likely plays a direct catalytic role in this reaction. This Corynebacterium aurimucosum (strain ATCC 700975 / DSM 44827 / CIP 107346 / CN-1) (Corynebacterium nigricans) protein is tRNA N6-adenosine threonylcarbamoyltransferase.